The primary structure comprises 504 residues: AMP phosphorylase 1 (504 aa).

Residues glycine 169, 195–200, and threonine 204 contribute to the AMP site; that span reads SRAITS. The active-site Proton donor is the aspartate 257. AMP-binding residues include serine 265 and lysine 289.

This sequence belongs to the thymidine/pyrimidine-nucleoside phosphorylase family. Type 2 subfamily.

It catalyses the reaction AMP + phosphate = alpha-D-ribose 1,5-bisphosphate + adenine. The enzyme catalyses CMP + phosphate = cytosine + alpha-D-ribose 1,5-bisphosphate. The catalysed reaction is UMP + phosphate = alpha-D-ribose 1,5-bisphosphate + uracil. Catalyzes the conversion of AMP and phosphate to adenine and ribose 1,5-bisphosphate (R15P). Exhibits phosphorylase activity toward CMP and UMP in addition to AMP. Functions in an archaeal AMP degradation pathway, together with R15P isomerase and RubisCO. The chain is AMP phosphorylase 1 from Archaeoglobus fulgidus (strain ATCC 49558 / DSM 4304 / JCM 9628 / NBRC 100126 / VC-16).